The primary structure comprises 88 residues: Outer membrane protein H.8 (88 aa).

The signal sequence occupies residues 1-17; the sequence is MKKSLFAAALLSLALAA. Residue cysteine 18 is the site of N-palmitoyl cysteine attachment. Cysteine 18 carries the S-diacylglycerol cysteine lipid modification. 13 tandem repeats follow at residues 23–27, 28–32, 33–37, 38–42, 43–47, 48–52, 53–57, 58–62, 63–67, 68–72, 73–77, 78–82, and 83–87. A 13 X 5 AA tandem repeats of [AS]-[AT]-E-A-[PAS] region spans residues 23–87; the sequence is AAEAPAAEAS…AAEAPAAEAA (65 aa). Residues 23–88 are disordered; the sequence is AAEAPAAEAS…AEAPAAEAAK (66 aa). The span at 25–88 shows a compositional bias: low complexity; it reads EAPAAEASST…AEAPAAEAAK (64 aa).

It localises to the cell outer membrane. This chain is Outer membrane protein H.8, found in Neisseria gonorrhoeae (strain ATCC 700825 / FA 1090).